The sequence spans 136 residues: Small ribosomal subunit protein bS16 (136 aa).

Over residues 114-123 (TLKARRRRAK) the composition is skewed to basic residues. The disordered stretch occupies residues 114-136 (TLKARRRRAKKEAEAASASSAEG).

The protein belongs to the bacterial ribosomal protein bS16 family.

The protein is Small ribosomal subunit protein bS16 of Chlorobium chlorochromatii (strain CaD3).